The chain runs to 454 residues: UDP-N-acetylmuramate--L-alanine ligase (454 aa).

112–118 (GTHGKTT) provides a ligand contact to ATP.

The protein belongs to the MurCDEF family.

Its subcellular location is the cytoplasm. The enzyme catalyses UDP-N-acetyl-alpha-D-muramate + L-alanine + ATP = UDP-N-acetyl-alpha-D-muramoyl-L-alanine + ADP + phosphate + H(+). It participates in cell wall biogenesis; peptidoglycan biosynthesis. In terms of biological role, cell wall formation. This is UDP-N-acetylmuramate--L-alanine ligase from Oleidesulfovibrio alaskensis (strain ATCC BAA-1058 / DSM 17464 / G20) (Desulfovibrio alaskensis).